A 281-amino-acid polypeptide reads, in one-letter code: Acetyl-coenzyme A carboxylase carboxyl transferase subunit beta 2 (281 aa).

The 256-residue stretch at 26–281 folds into the CoA carboxyltransferase N-terminal domain; sequence LLTRCPVCHE…TITQGGHQDV (256 aa). Positions 30, 33, 48, and 51 each coordinate Zn(2+). The segment at 30-51 adopts a C4-type zinc-finger fold; it reads CPVCHEDCYTQDLGEFKVCPHC.

This sequence belongs to the AccD/PCCB family. Acetyl-CoA carboxylase is a heterohexamer composed of biotin carboxyl carrier protein (AccB), biotin carboxylase (AccC) and two subunits each of ACCase subunit alpha (AccA) and ACCase subunit beta (AccD). Requires Zn(2+) as cofactor.

It is found in the cytoplasm. It carries out the reaction N(6)-carboxybiotinyl-L-lysyl-[protein] + acetyl-CoA = N(6)-biotinyl-L-lysyl-[protein] + malonyl-CoA. Its pathway is lipid metabolism; malonyl-CoA biosynthesis; malonyl-CoA from acetyl-CoA: step 1/1. Functionally, component of the acetyl coenzyme A carboxylase (ACC) complex. Biotin carboxylase (BC) catalyzes the carboxylation of biotin on its carrier protein (BCCP) and then the CO(2) group is transferred by the transcarboxylase to acetyl-CoA to form malonyl-CoA. This is Acetyl-coenzyme A carboxylase carboxyl transferase subunit beta 2 from Lactiplantibacillus plantarum (strain JDM1) (Lactobacillus plantarum).